Reading from the N-terminus, the 561-residue chain is Solute carrier family 41 member 2 (561 aa).

The Extracellular portion of the chain corresponds to 1 to 150; that stretch reads MTANTGEPYK…KESSIAMALQ (150 aa). A helical transmembrane segment spans residues 151–171; sequence ILVPFLLAGFGTVSAGMVLDI. At 172–183 the chain is on the cytoplasmic side; that stretch reads VQHWDVFKNLTE. The helical transmembrane segment at 184-204 threads the bilayer; the sequence is VFILVPALLGLKGNLEMTLAS. The Extracellular segment spans residues 205–233; the sequence is RLSTAVNVGKMDSPIEKWNLIIGNLALKQ. A helical membrane pass occupies residues 234-254; sequence VQATVVGFLAAVFAVILGWIP. The Cytoplasmic segment spans residues 255-270; that stretch reads DGKYQLDHAILLCSSS. Residues 271–291 traverse the membrane as a helical segment; it reads VATAFIASLLQGIIMVGVIVG. Residues 292 to 301 are Extracellular-facing; sequence SKKTGINPDN. Residues 302–322 form a helical membrane-spanning segment; the sequence is VATPIAASFGDLITLAILAWI. The Cytoplasmic portion of the chain corresponds to 323-333; the sequence is SQGLYNCLGSY. A helical membrane pass occupies residues 334–354; that stretch reads AFVSPLVGVFFLAMTPIWIVI. Residues 355–364 lie on the Extracellular side of the membrane; it reads ASKHPATRTV. Residues 365 to 385 traverse the membrane as a helical segment; sequence LHSGWEPVITAMLISSIGGLI. Residues 386 to 394 are Cytoplasmic-facing; that stretch reads LDTTVSDPN. Residues 395 to 415 traverse the membrane as a helical segment; sequence LVGIVVYTPVINGIGGNLVAI. Residues 416 to 457 lie on the Extracellular side of the membrane; the sequence is QASRISTYLHLYSIPGELPEDAKGCYHPCRTFCGTGVNNKSA. A helical membrane pass occupies residues 458–478; it reads QVLLSLVIPGHLIFLYTIYLM. Over 479-487 the chain is Cytoplasmic; it reads KSGHTSLTP. A helical membrane pass occupies residues 488-508; that stretch reads IFVAVYLLAALLQVFALLWIA. The Extracellular portion of the chain corresponds to 509-531; sequence DWMVHHIWRKGKDPDSFSIPYLT. Residues 532 to 552 form a helical membrane-spanning segment; sequence ALGDLLGTALLAISFHILWII. Over 553–561 the chain is Cytoplasmic; it reads GDRDGDVGD.

The protein belongs to the SLC41A transporter family.

It localises to the cell membrane. The enzyme catalyses Mg(2+)(in) = Mg(2+)(out). It catalyses the reaction Mn(2+)(in) = Mn(2+)(out). The catalysed reaction is Co(2+)(in) = Co(2+)(out). It carries out the reaction Ni(2+)(in) = Ni(2+)(out). The enzyme catalyses Fe(2+)(in) = Fe(2+)(out). Functionally, acts as a plasma-membrane magnesium transporter. Can also mediate the transport of other divalent metal cations in an order of Ba(2+) &gt; Ni(2+) &gt; Co(2+) &gt; Fe(2+) &gt; Mn(2+). In Xenopus laevis (African clawed frog), this protein is Solute carrier family 41 member 2 (slc41a2).